Consider the following 353-residue polypeptide: Photosystem II D2 protein (353 aa).

T2 bears the N-acetylthreonine mark. T2 carries the phosphothreonine modification. Residues 41–61 (CAYFAVGGWFTGTTFVTSWYT) traverse the membrane as a helical segment. Residue H118 coordinates chlorophyll a. The helical transmembrane segment at 125–141 (GFMLRQFELARSVQLRP) threads the bilayer. 2 residues coordinate pheophytin a: Q130 and N143. A helical transmembrane segment spans residues 153–166 (VFVSVFLIYPLGQS). H198 lines the chlorophyll a pocket. Residues 208–228 (AALLCAIHGATVENTLFEDGD) traverse the membrane as a helical segment. The a plastoquinone site is built by H215 and F262. Residue H215 coordinates Fe cation. H269 contributes to the Fe cation binding site. Residues 279–295 (GLWMSALGVVGLALNLR) traverse the membrane as a helical segment.

Belongs to the reaction center PufL/M/PsbA/D family. As to quaternary structure, PSII is composed of 1 copy each of membrane proteins PsbA, PsbB, PsbC, PsbD, PsbE, PsbF, PsbH, PsbI, PsbJ, PsbK, PsbL, PsbM, PsbT, PsbX, PsbY, PsbZ, Psb30/Ycf12, at least 3 peripheral proteins of the oxygen-evolving complex and a large number of cofactors. It forms dimeric complexes. Requires The D1/D2 heterodimer binds P680, chlorophylls that are the primary electron donor of PSII, and subsequent electron acceptors. It shares a non-heme iron and each subunit binds pheophytin, quinone, additional chlorophylls, carotenoids and lipids. There is also a Cl(-1) ion associated with D1 and D2, which is required for oxygen evolution. The PSII complex binds additional chlorophylls, carotenoids and specific lipids. as cofactor.

The protein resides in the plastid. It localises to the chloroplast thylakoid membrane. The enzyme catalyses 2 a plastoquinone + 4 hnu + 2 H2O = 2 a plastoquinol + O2. Functionally, photosystem II (PSII) is a light-driven water:plastoquinone oxidoreductase that uses light energy to abstract electrons from H(2)O, generating O(2) and a proton gradient subsequently used for ATP formation. It consists of a core antenna complex that captures photons, and an electron transfer chain that converts photonic excitation into a charge separation. The D1/D2 (PsbA/PsbD) reaction center heterodimer binds P680, the primary electron donor of PSII as well as several subsequent electron acceptors. D2 is needed for assembly of a stable PSII complex. In Ipomoea purpurea (Common morning glory), this protein is Photosystem II D2 protein.